The primary structure comprises 224 residues: Adenylate kinase (224 aa).

Residue 10–15 participates in ATP binding; it reads GSGKST. Residues 30–59 form an NMP region; that stretch reads SSGDMIRAEIEKGSELGKELKKYLAKGELI. Residues S31, R36, 57–59, 83–86, and Q90 each bind AMP; these read ELI and GYPR. The interval 124–161 is LID; the sequence is GRRICPKCGAVYHLRYRPPKVPGKCDLCGSQLIQREDD. Residue R125 coordinates ATP. Positions 128 and 131 each coordinate Zn(2+). Position 134 to 135 (134 to 135) interacts with ATP; sequence VY. Residues C148 and C151 each coordinate Zn(2+). Residues R158 and R169 each coordinate AMP. G197 provides a ligand contact to ATP.

This sequence belongs to the adenylate kinase family. As to quaternary structure, monomer.

The protein resides in the cytoplasm. The enzyme catalyses AMP + ATP = 2 ADP. The protein operates within purine metabolism; AMP biosynthesis via salvage pathway; AMP from ADP: step 1/1. In terms of biological role, catalyzes the reversible transfer of the terminal phosphate group between ATP and AMP. Plays an important role in cellular energy homeostasis and in adenine nucleotide metabolism. In Thermococcus onnurineus (strain NA1), this protein is Adenylate kinase.